Consider the following 64-residue polypeptide: Large ribosomal subunit protein bL33 (64 aa).

The protein belongs to the bacterial ribosomal protein bL33 family.

This chain is Large ribosomal subunit protein bL33, found in Nostoc sp. (strain PCC 7120 / SAG 25.82 / UTEX 2576).